Reading from the N-terminus, the 160-residue chain is Large ribosomal subunit protein uL16 (160 aa).

Positions 138-160 (INLSSDSSGEGKTGKDSKEEVKK) are disordered. The segment covering 149–160 (KTGKDSKEEVKK) has biased composition (basic and acidic residues).

It belongs to the universal ribosomal protein uL16 family. Part of the 50S ribosomal subunit.

Functionally, binds 23S rRNA and is also seen to make contacts with the A and possibly P site tRNAs. The sequence is that of Large ribosomal subunit protein uL16 from Prochlorococcus marinus subsp. pastoris (strain CCMP1986 / NIES-2087 / MED4).